The primary structure comprises 55 residues: Large ribosomal subunit protein bL33 (55 aa).

This sequence belongs to the bacterial ribosomal protein bL33 family.

In Beijerinckia indica subsp. indica (strain ATCC 9039 / DSM 1715 / NCIMB 8712), this protein is Large ribosomal subunit protein bL33.